The chain runs to 2488 residues: PKS-NRPS hybrid synthetase swnK (2488 aa).

The adenylation (A) domain stretch occupies residues 33-422 (FEQVADRFPD…GRIDGVVKIR (390 aa)). The region spanning 523–598 (QPTSELEQRI…ALAAYLAGTG (76 aa)) is the Carrier 1 domain. The residue at position 558 (Ser558) is an O-(pantetheine 4'-phosphoryl)serine. In terms of domain architecture, Ketosynthase family 3 (KS3) spans 616–1039 (HEDIAIVSMA…GTNAHVIVEE (424 aa)). Catalysis depends on for beta-ketoacyl synthase activity residues Cys785, His920, and His960. Residues 1149-1471 (LFTGQGSQLP…SLSELHVRHV (323 aa)) form a malonyl-CoA:ACP transacylase (MAT) domain region. Positions 1723–1901 (GAVLVTGGLG…ASSVAYGTWA (179 aa)) are ketoreductase (KR) domain. Residues 2002–2077 (SIVLHMVQAT…SLSEFLLCRL (76 aa)) enclose the Carrier 2 domain. Position 2037 is an O-(pantetheine 4'-phosphoryl)serine (Ser2037). Residues 2084–2103 (STSSPSDTDGATPSTPTSAA) form a disordered region. Residues 2136–2364 (VTGATGFVGT…VLPVDYLCGT (229 aa)) form a thioester reductase (TE) domain region.

The protein in the N-terminal section; belongs to the NRP synthetase family.

The enzyme catalyses L-pipecolate + malonyl-CoA + 2 NADPH + 4 H(+) = (8aS)-octahydroindolizin-1-one + CO2 + 2 NADP(+) + CoA + 2 H2O. The catalysed reaction is L-pipecolate + malonyl-CoA + 3 NADPH + 5 H(+) = (1R,8aS)-octahydroindolizin-1-ol + CO2 + 3 NADP(+) + CoA + 2 H2O. It catalyses the reaction L-pipecolate + malonyl-CoA + 3 NADPH + 5 H(+) = (1S,8aS)-octahydroindolizin-1-ol + CO2 + 3 NADP(+) + CoA + 2 H2O. The protein operates within mycotoxin biosynthesis. Its function is as follows. PKS-NRPS hybrid synthetase; part of the gene cluster that mediates the biosynthesis of swainsonine (SW), a cytotoxic fungal alkaloid and a potential cancer therapy drug. Swainsonine production occurs via a multibranched pathway and is dispensable for fungal colonization of plants and infection of insect hosts. The first step of swainsonine biosynthesis is the production of the precursor pipecolic acid (PA) via conversion of L-lysine (Lys) to 1-piperideine-6-carboxylate (P6C) by the aminotransferase swnA, the latter being further reduced to PA by the reductase swnR. PA can be converted from lysine by both the SW biosynthetic cluster and the unclustered genes such as lysine cyclodeaminase. The PKS-NRPS hybrid synthetase swnK uptakes and condensates PA and malonyl-CoA with and without skipping of the ketoreductase (KR) domain in order to produce 3 intermediates, 1-oxoindolizidine, (1S)-1-hydroxyindolizin, and (1R)-1-hydroxyindolizine; with the transisomer (1S)-1-hydroxyindolizin being predominant. The terminal thioester reductase (TE) domain of swnK is involved in reduction of the thioester bond to release the intermediate aldehydes. The oxidoreductase swnN could contribute to the reduction of 1-oxoindolizidine to (1S)-1-hydroxyindolizin and (1R)-1-hydroxyindolizine, contributing to the major route of SW production. The dioxygenase swnH2 would be responsible for the oxidization of (1R)-1-hydroxyindolizine into (1R,2S)-1,2-dihydroxyindolizine and of (1S)-1-hydroxyindolizin to yield both (1R,2S)-1,2-dihydroxyindolizine and (1S,2S)-1,2-dihydroxyindolizine. The dioxygenase swnH1 then performs the conversion of the 1,2-dihydroxyindolizine epimers to SW. In Metarhizium robertsii (strain ARSEF 23 / ATCC MYA-3075) (Metarhizium anisopliae (strain ARSEF 23)), this protein is PKS-NRPS hybrid synthetase swnK.